We begin with the raw amino-acid sequence, 519 residues long: Galactan beta-1,4-galactosyltransferase GALS2 (519 aa).

Residues 28-48 (LALMALLVLCTLATLLPFLPS) traverse the membrane as a helical segment. One can recognise a GT92 domain in the interval 257–471 (DYLYCGSSLY…YHGSISQRRE (215 aa)).

It belongs to the glycosyltransferase 92 family. As to expression, expressed in the midrib of mature leaves, root vasculature, flower filaments, siliques and seeds.

Its subcellular location is the golgi apparatus membrane. In terms of biological role, involved in the biosynthesis of beta-1,4-galactan. Beta-1,4-galactans are abundant polysaccharides in plant cell walls and are found as side-chain of rhamnogalacturonan I, which is a major component of pectin. The chain is Galactan beta-1,4-galactosyltransferase GALS2 from Arabidopsis thaliana (Mouse-ear cress).